The chain runs to 135 residues: Aspartate 1-decarboxylase (135 aa).

Ser25 (schiff-base intermediate with substrate; via pyruvic acid) is an active-site residue. Ser25 is modified (pyruvic acid (Ser)). Thr57 contacts substrate. The active-site Proton donor is Tyr58. Residue 73–75 (GAA) participates in substrate binding.

It belongs to the PanD family. As to quaternary structure, heterooctamer of four alpha and four beta subunits. Pyruvate is required as a cofactor. Post-translationally, is synthesized initially as an inactive proenzyme, which is activated by self-cleavage at a specific serine bond to produce a beta-subunit with a hydroxyl group at its C-terminus and an alpha-subunit with a pyruvoyl group at its N-terminus.

The protein localises to the cytoplasm. The catalysed reaction is L-aspartate + H(+) = beta-alanine + CO2. The protein operates within cofactor biosynthesis; (R)-pantothenate biosynthesis; beta-alanine from L-aspartate: step 1/1. In terms of biological role, catalyzes the pyruvoyl-dependent decarboxylation of aspartate to produce beta-alanine. This is Aspartate 1-decarboxylase from Mycobacterium sp. (strain JLS).